Here is a 253-residue protein sequence, read N- to C-terminus: Discoidin-1 subunit B/C (253 aa).

Residue S2 is modified to N-acetylserine. Residues 2–152 (STQGLVQLIS…ISLRCEFYTQ (151 aa)) enclose the F5/8 type C domain. The short motif at 79-81 (RGD) is the Cell attachment site element.

In terms of assembly, tetramer of four different chains (A to D). As to expression, stalk cells.

The protein localises to the cytoplasm. Functionally, galactose- and N-acetylgalactosamine-binding lectin. May play a role in cell-substratum adhesion rather than in cell-cell adhesion. May be necessary for the maintenance of normal elongate morphology during aggregation. The polypeptide is Discoidin-1 subunit B/C (dscC-1) (Dictyostelium discoideum (Social amoeba)).